The following is a 154-amino-acid chain: UPF0547 protein C16orf87 homolog (154 aa).

A disordered region spans residues 46–119; sequence HPEKAPSSTE…KHEEEREKQE (74 aa). A compositionally biased stretch (basic and acidic residues) spans 68-84; that stretch reads VRREKINSTVNKDLENR. Phosphoserine is present on Ser91. Positions 104-132 form a coiled coil; that stretch reads KSASAKKHEEEREKQEKEIDIYANLSDEK. Positions 109–119 are enriched in basic and acidic residues; the sequence is KKHEEEREKQE.

This sequence belongs to the UPF0547 family.

This Bos taurus (Bovine) protein is UPF0547 protein C16orf87 homolog.